The chain runs to 604 residues: Testis-expressed protein 13C-1 (604 aa).

Disordered regions lie at residues 314–337, 374–397, 485–523, and 538–580; these read EGEG…SHKD, PVMP…RPKI, CLNA…HPRK, and ATKQ…SANC. The span at 322–333 shows a compositional bias: polar residues; the sequence is QGTSLHGDSSNN. The span at 544–572 shows a compositional bias: basic and acidic residues; it reads KQPEGIKSLESKQPQETKSSESKQQEKPL.

Belongs to the TEX13 family.

Its function is as follows. Plays a role in transcriptional repression. The protein is Testis-expressed protein 13C-1 of Mus musculus (Mouse).